Reading from the N-terminus, the 386-residue chain is Zinc finger CCCH domain-containing protein 2 (386 aa).

C3H1-type zinc fingers lie at residues 116 to 143 (HYSGTACPDFRKGGCKRGDACEYAHGVF) and 151 to 175 (RYRTQPCKDGTACRRRVCFFAHTPD). 2 disordered regions span residues 180–200 (LPAQQSSPRSVASSPLAESYD) and 220–252 (SSPTSTLMSPPKSPPSESPPLSPDGAAAIRRGS). Residues 182 to 192 (AQQSSPRSVAS) are compositionally biased toward polar residues. Positions 220-229 (SSPTSTLMSP) are enriched in low complexity. The segment covering 230–241 (PKSPPSESPPLS) has biased composition (pro residues).

The protein localises to the nucleus. Involved in leaf senescence delay. May repress jasmonic acid (JA) signaling role in promoting leaf senescence. May regulate panicle development and pollination/fertilization process. The sequence is that of Zinc finger CCCH domain-containing protein 2 from Oryza sativa subsp. japonica (Rice).